The chain runs to 265 residues: Type II pantothenate kinase (265 aa).

6 to 13 (DAGGTLIK) serves as a coordination point for ATP. E70 functions as the Proton acceptor in the catalytic mechanism. Residues T99, 121-125 (GGMIQ), Y137, and S225 contribute to the ATP site.

This sequence belongs to the type II pantothenate kinase family. As to quaternary structure, homodimer.

It is found in the cytoplasm. The enzyme catalyses (R)-pantothenate + ATP = (R)-4'-phosphopantothenate + ADP + H(+). It participates in cofactor biosynthesis; coenzyme A biosynthesis; CoA from (R)-pantothenate: step 1/5. Catalyzes the phosphorylation of pantothenate (Pan), the first step in CoA biosynthesis. In Staphylococcus epidermidis (strain ATCC 35984 / DSM 28319 / BCRC 17069 / CCUG 31568 / BM 3577 / RP62A), this protein is Type II pantothenate kinase.